The primary structure comprises 940 residues: Glutamate receptor 2.9 (940 aa).

The first 23 residues, 1–23 (MKTNNTFLSYFVCGFLLMGVGLG), serve as a signal peptide directing secretion. The Extracellular portion of the chain corresponds to 24–566 (QNQTSEIKVG…DTWVFLEPWS (543 aa)). N-linked (GlcNAc...) asparagine glycosylation is found at N25, N39, N115, N338, N345, and N528. The chain crosses the membrane as a helical span at residues 567–587 (LELWVTTGCFFVFIGFVVWLF). The Cytoplasmic portion of the chain corresponds to 588-596 (EHRVNTDFR). The helical transmembrane segment at 597–617 (GPPQYQIGTSLWFSFSTMVFA) threads the bilayer. Residues 618-628 (HRENVVSNLAR) lie on the Cytoplasmic side of the membrane. Residues 629–649 (FVVVVWCFVVLVLTQSYTASL) form a helical membrane-spanning segment. Topologically, residues 650–811 (TSFLTVQSLQ…NRLNLSSFLG (162 aa)) are extracellular. 3 N-linked (GlcNAc...) asparagine glycosylation sites follow: N771, N776, and N805. Residues 812 to 832 (LFLIAGTAISFSLLVFVALFL) traverse the membrane as a helical segment. Residues 833–940 (YEHRHTLGDD…ESDIECRVEQ (108 aa)) are Cytoplasmic-facing. 2 disordered regions span residues 876–900 (ISSP…QSPS) and 914–940 (PSEE…RVEQ).

The protein belongs to the glutamate-gated ion channel (TC 1.A.10.1) family. As to quaternary structure, may form heteromers. As to expression, expressed predominantly in roots.

It localises to the membrane. In terms of biological role, glutamate-gated receptor that probably acts as a non-selective cation channel. May be involved in light-signal transduction and calcium homeostasis via the regulation of calcium influx into cells. This is Glutamate receptor 2.9 (GLR2.9) from Arabidopsis thaliana (Mouse-ear cress).